The chain runs to 247 residues: ATP synthase subunit a, chloroplastic (247 aa).

5 consecutive transmembrane segments (helical) span residues 38–58, 95–115, 134–154, 199–219, and 220–240; these read QVLITSWVVITILLGSVIIAV, VPFIGTMFLFIFVSNWSGALL, INTTVALALLTSAAYFYAGLS, LVVVVLVSLVPLVVPIPVMFL, and GLFTSGIQALIFATLAAAYIG.

This sequence belongs to the ATPase A chain family. In terms of assembly, F-type ATPases have 2 components, CF(1) - the catalytic core - and CF(0) - the membrane proton channel. CF(1) has five subunits: alpha(3), beta(3), gamma(1), delta(1), epsilon(1). CF(0) has four main subunits: a, b, b' and c.

The protein resides in the plastid. It localises to the chloroplast thylakoid membrane. In terms of biological role, key component of the proton channel; it plays a direct role in the translocation of protons across the membrane. In Oryza nivara (Indian wild rice), this protein is ATP synthase subunit a, chloroplastic.